Consider the following 309-residue polypeptide: MSIRILPDSEIKAAASSFHAPALLFANPKNLYQRRIARFTSLSNAHPLEDYLHFASQVAEAQLAVLQQQPIAQDPRLSAEKLSAEDLAKQPLNAQRWQRDPVWQTLLMAILAEMKPKANETILNTIETLEKYSKAERDSIADKLLAQEFEQISSAQAVFIWAALSLYWLQLVQQIPHSSHKESGESLHVCPICASAPVTSVIHFGAEQGLRYLHCALCETEWNMVRSKCTNCDQTGKLDYWSLDSEIAAVKAESCGDCHSYLKALYQERDPKVEAVADDLASIFLDVEMEEKGLQRSGLNPFLFPNPEA.

The protein belongs to the FdhE family.

The protein resides in the cytoplasm. Its function is as follows. Necessary for formate dehydrogenase activity. This chain is Protein FdhE homolog, found in Pasteurella multocida (strain Pm70).